We begin with the raw amino-acid sequence, 102 residues long: Secreted RxLR effector protein 61 (102 aa).

A signal peptide spans 1–22 (MAFQLRIVQHLLHITFLRLPLA). The RxLR-dEER signature appears at 51–60 (RRLRQLNEHR).

This sequence belongs to the RxLR effector family.

The protein localises to the secreted. It localises to the host chloroplast envelope. The protein resides in the host cytoplasm. Its subcellular location is the host nucleus. In terms of biological role, effector that partially suppresses the tobacco programmed cell death induced by cell death-inducing proteins. The protein is Secreted RxLR effector protein 61 of Plasmopara viticola (Downy mildew of grapevine).